Reading from the N-terminus, the 132-residue chain is Small ribosomal subunit protein uS8 (132 aa).

The protein belongs to the universal ribosomal protein uS8 family. In terms of assembly, part of the 30S ribosomal subunit. Contacts proteins S5 and S12.

Functionally, one of the primary rRNA binding proteins, it binds directly to 16S rRNA central domain where it helps coordinate assembly of the platform of the 30S subunit. The polypeptide is Small ribosomal subunit protein uS8 (Gluconacetobacter diazotrophicus (strain ATCC 49037 / DSM 5601 / CCUG 37298 / CIP 103539 / LMG 7603 / PAl5)).